Here is a 54-residue protein sequence, read N- to C-terminus: Protein hunchback (54 aa).

3 consecutive C2H2-type zinc fingers follow at residues 1–3, 9–31, and 37–54; these read RKH, FQCD…RKFH, and YRCA…SFKL.

It belongs to the hunchback C2H2-type zinc-finger protein family.

It is found in the nucleus. Functionally, gap class segmentation protein that controls development of head structures. The sequence is that of Protein hunchback (hb) from Calliphora vicina (Blue blowfly).